Reading from the N-terminus, the 206-residue chain is MARYLGPKLKLSRREGTDLFLKSGVRAIDTKCKIETIPGQHGARRGRLSDYGVQLREKQKVRRIFGVLEKQFSNYYKEAARQKGNTGENLLQLLETRLDNVVYRMGYASTRAEARQLVSHKAIVVNGVVVNIPSFTVKAEDTVSVREKSKTQARIIAALELADQREKPLWVEVDTKKLEGVFKRVPDRADLSAEINEQLIVELYSK.

The 61-residue stretch at 96-156 folds into the S4 RNA-binding domain; the sequence is TRLDNVVYRM…EKSKTQARII (61 aa).

The protein belongs to the universal ribosomal protein uS4 family. As to quaternary structure, part of the 30S ribosomal subunit. Contacts protein S5. The interaction surface between S4 and S5 is involved in control of translational fidelity.

Functionally, one of the primary rRNA binding proteins, it binds directly to 16S rRNA where it nucleates assembly of the body of the 30S subunit. In terms of biological role, with S5 and S12 plays an important role in translational accuracy. In Colwellia psychrerythraea (strain 34H / ATCC BAA-681) (Vibrio psychroerythus), this protein is Small ribosomal subunit protein uS4.